We begin with the raw amino-acid sequence, 500 residues long: Protein FAM114A2 (500 aa).

Residues 1–82 (MSNKDDLETA…AAGKETVSKD (82 aa)) are disordered. A phosphoserine mark is found at S93, S152, and S215.

Belongs to the FAM114 family.

The chain is Protein FAM114A2 (FAM114A1) from Bos taurus (Bovine).